The sequence spans 266 residues: Protein-ADP-ribose hydrolase (266 aa).

The 192-residue stretch at 74 to 265 folds into the Macro domain; sequence TDLKDLKPIK…LYKEALNRDA (192 aa). 3 residues coordinate ADP-D-ribose: D93, I94, and N107. Zn(2+) contacts are provided by C113, H118, and C120. C120, I121, D122, S212, T213, G214, and F216 together coordinate ADP-D-ribose.

Belongs to the MacroD-type family. Zn-Macro subfamily. In terms of assembly, monomer. Directly interacts with the lipoylated form of GcvH-L. Requires Zn(2+) as cofactor.

It carries out the reaction 4-O-(ADP-D-ribosyl)-L-aspartyl-[protein] + H2O = L-aspartyl-[protein] + ADP-D-ribose + H(+). In terms of biological role, ADP-ribosylhydrolase that specifically reverses the SirTM-mediated mono-ADP-ribosylation at an asparatate residue of GcvH-L (SAV0324), by releasing ADP-ribose from the target protein. May play a role in the regulation of the response to host-induced oxidative stress. The protein is Protein-ADP-ribose hydrolase of Staphylococcus aureus (strain Mu50 / ATCC 700699).